The primary structure comprises 184 residues: Endothelial cell-specific molecule 1 (184 aa).

A signal peptide spans 1 to 21; sequence MKSLLLLTTLLIPLHLGMAWS. Residues 24 to 102 enclose the IGFBP N-terminal domain; the sequence is YAVDCPEHCD…GDEFGVCKDC (79 aa). Disulfide bonds link C28-C51, C32-C53, C37-C54, C43-C57, C65-C83, and C77-C99. Residues 145 to 184 form a disordered region; it reads RTSASQTERDAASGDGNAVREEIGDRNAARPSVMKWLNPR. Basic and acidic residues predominate over residues 151-172; the sequence is TERDAASGDGNAVREEIGDRNA. S157 carries O-linked (Xyl...) (chondroitin sulfate) serine glycosylation.

In terms of processing, O-glycosylated; contains chondroitin sulfate and dermatan sulfate. As to expression, pineal gland specific.

The protein localises to the secreted. Functionally, involved in angiogenesis; promotes angiogenic sprouting. May have potent implications in lung endothelial cell-leukocyte interactions. This chain is Endothelial cell-specific molecule 1 (Esm1), found in Rattus norvegicus (Rat).